We begin with the raw amino-acid sequence, 734 residues long: Photosystem I P700 chlorophyll a apoprotein A2 (734 aa).

8 helical membrane-spanning segments follow: residues 46–69, 135–158, 175–199, 273–291, 330–353, 369–395, 417–439, and 517–535; these read IFAS…FHVA, LYTG…LHLQ, LNHH…HVAI, MAHH…GHMY, IHFQ…QHMY, AALY…IFFI, AIIS…LYVH, and FLVH…LILV. Residues Cys559 and Cys568 each coordinate [4Fe-4S] cluster. The next 2 helical transmembrane spans lie at 575-596 and 643-665; these read AFYL…YWHW and LSVW…MFLI. Chlorophyll a contacts are provided by His654, Met662, and Tyr670. Trp671 serves as a coordination point for phylloquinone. The chain crosses the membrane as a helical span at residues 707–727; sequence LVGLAHFSVGYIFTYAAFLIA.

Belongs to the PsaA/PsaB family. In terms of assembly, the PsaA/B heterodimer binds the P700 chlorophyll special pair and subsequent electron acceptors. PSI consists of a core antenna complex that captures photons, and an electron transfer chain that converts photonic excitation into a charge separation. The eukaryotic PSI reaction center is composed of at least 11 subunits. It depends on P700 is a chlorophyll a/chlorophyll a' dimer, A0 is one or more chlorophyll a, A1 is one or both phylloquinones and FX is a shared 4Fe-4S iron-sulfur center. as a cofactor.

It localises to the plastid. The protein localises to the chloroplast thylakoid membrane. The catalysed reaction is reduced [plastocyanin] + hnu + oxidized [2Fe-2S]-[ferredoxin] = oxidized [plastocyanin] + reduced [2Fe-2S]-[ferredoxin]. In terms of biological role, psaA and PsaB bind P700, the primary electron donor of photosystem I (PSI), as well as the electron acceptors A0, A1 and FX. PSI is a plastocyanin-ferredoxin oxidoreductase, converting photonic excitation into a charge separation, which transfers an electron from the donor P700 chlorophyll pair to the spectroscopically characterized acceptors A0, A1, FX, FA and FB in turn. Oxidized P700 is reduced on the lumenal side of the thylakoid membrane by plastocyanin. The sequence is that of Photosystem I P700 chlorophyll a apoprotein A2 from Draba nemorosa (Woodland whitlowgrass).